A 229-amino-acid chain; its full sequence is Ribonuclease 3 (229 aa).

The RNase III domain maps to Leu5–Gly127. Position 40 (Glu40) interacts with Mg(2+). Asp44 is a catalytic residue. The Mg(2+) site is built by Asp113 and Glu116. The active site involves Glu116. Residues Asp154 to Val224 form the DRBM domain.

This sequence belongs to the ribonuclease III family. In terms of assembly, homodimer. Requires Mg(2+) as cofactor.

It localises to the cytoplasm. It carries out the reaction Endonucleolytic cleavage to 5'-phosphomonoester.. Functionally, digests double-stranded RNA. Involved in the processing of primary rRNA transcript to yield the immediate precursors to the large and small rRNAs (23S and 16S). Processes some mRNAs, and tRNAs when they are encoded in the rRNA operon. Processes pre-crRNA and tracrRNA of type II CRISPR loci if present in the organism. The protein is Ribonuclease 3 of Pseudomonas fluorescens (strain SBW25).